The primary structure comprises 187 residues: tRNA (cytidine(56)-2'-O)-methyltransferase (187 aa).

S-adenosyl-L-methionine contacts are provided by residues leucine 94 and glycine 120–valine 124.

The protein belongs to the aTrm56 family. Homodimer.

It localises to the cytoplasm. It catalyses the reaction cytidine(56) in tRNA + S-adenosyl-L-methionine = 2'-O-methylcytidine(56) in tRNA + S-adenosyl-L-homocysteine + H(+). In terms of biological role, specifically catalyzes the AdoMet-dependent 2'-O-ribose methylation of cytidine at position 56 in tRNAs. The polypeptide is tRNA (cytidine(56)-2'-O)-methyltransferase (Hyperthermus butylicus (strain DSM 5456 / JCM 9403 / PLM1-5)).